The sequence spans 62 residues: Sec-independent protein translocase protein TatAc (62 aa).

Residues 8 to 28 (ILVILFVGFLVFGPDKLPALG) traverse the membrane as a helical segment.

The protein belongs to the TatA/E family. In terms of assembly, forms a complex with TatC.

The protein localises to the cell membrane. Its function is as follows. Part of the twin-arginine translocation (Tat) system that transports large folded proteins containing a characteristic twin-arginine motif in their signal peptide across membranes. TatA could form the protein-conducting channel of the Tat system. This Bacillus subtilis (strain 168) protein is Sec-independent protein translocase protein TatAc.